The sequence spans 300 residues: Ribonuclease HIII (300 aa).

The 218-residue stretch at Ile83–Lys300 folds into the RNase H type-2 domain. Positions 89, 90, and 194 each coordinate a divalent metal cation.

Belongs to the RNase HII family. RnhC subfamily. Mn(2+) is required as a cofactor. Mg(2+) serves as cofactor.

The protein resides in the cytoplasm. The catalysed reaction is Endonucleolytic cleavage to 5'-phosphomonoester.. In terms of biological role, endonuclease that specifically degrades the RNA of RNA-DNA hybrids. This is Ribonuclease HIII from Streptococcus pyogenes serotype M4 (strain MGAS10750).